The chain runs to 53 residues: ATP synthase protein 8 (53 aa).

Residues M4 to C24 traverse the membrane as a helical segment.

This sequence belongs to the ATPase protein 8 family. In terms of assembly, F-type ATPases have 2 components, CF(1) - the catalytic core - and CF(0) - the membrane proton channel.

The protein resides in the mitochondrion membrane. Functionally, mitochondrial membrane ATP synthase (F(1)F(0) ATP synthase or Complex V) produces ATP from ADP in the presence of a proton gradient across the membrane which is generated by electron transport complexes of the respiratory chain. F-type ATPases consist of two structural domains, F(1) - containing the extramembraneous catalytic core and F(0) - containing the membrane proton channel, linked together by a central stalk and a peripheral stalk. During catalysis, ATP synthesis in the catalytic domain of F(1) is coupled via a rotary mechanism of the central stalk subunits to proton translocation. Part of the complex F(0) domain. Minor subunit located with subunit a in the membrane. This chain is ATP synthase protein 8 (mt:ATPase8), found in Drosophila sechellia (Fruit fly).